A 282-amino-acid chain; its full sequence is 4-hydroxy-3-methylbut-2-enyl diphosphate reductase (282 aa).

Cys-12 is a binding site for [4Fe-4S] cluster. (2E)-4-hydroxy-3-methylbut-2-enyl diphosphate contacts are provided by His-40 and His-72. 2 residues coordinate dimethylallyl diphosphate: His-40 and His-72. 2 residues coordinate isopentenyl diphosphate: His-40 and His-72. Position 94 (Cys-94) interacts with [4Fe-4S] cluster. (2E)-4-hydroxy-3-methylbut-2-enyl diphosphate is bound at residue His-122. His-122 lines the dimethylallyl diphosphate pocket. His-122 lines the isopentenyl diphosphate pocket. Glu-124 acts as the Proton donor in catalysis. Thr-160 lines the (2E)-4-hydroxy-3-methylbut-2-enyl diphosphate pocket. Position 188 (Cys-188) interacts with [4Fe-4S] cluster. Residues Ser-216, Asn-218, and Ser-260 each coordinate (2E)-4-hydroxy-3-methylbut-2-enyl diphosphate. Ser-216, Asn-218, and Ser-260 together coordinate dimethylallyl diphosphate. Ser-216, Asn-218, and Ser-260 together coordinate isopentenyl diphosphate.

The protein belongs to the IspH family. Requires [4Fe-4S] cluster as cofactor.

The enzyme catalyses isopentenyl diphosphate + 2 oxidized [2Fe-2S]-[ferredoxin] + H2O = (2E)-4-hydroxy-3-methylbut-2-enyl diphosphate + 2 reduced [2Fe-2S]-[ferredoxin] + 2 H(+). It carries out the reaction dimethylallyl diphosphate + 2 oxidized [2Fe-2S]-[ferredoxin] + H2O = (2E)-4-hydroxy-3-methylbut-2-enyl diphosphate + 2 reduced [2Fe-2S]-[ferredoxin] + 2 H(+). It functions in the pathway isoprenoid biosynthesis; dimethylallyl diphosphate biosynthesis; dimethylallyl diphosphate from (2E)-4-hydroxy-3-methylbutenyl diphosphate: step 1/1. The protein operates within isoprenoid biosynthesis; isopentenyl diphosphate biosynthesis via DXP pathway; isopentenyl diphosphate from 1-deoxy-D-xylulose 5-phosphate: step 6/6. Catalyzes the conversion of 1-hydroxy-2-methyl-2-(E)-butenyl 4-diphosphate (HMBPP) into a mixture of isopentenyl diphosphate (IPP) and dimethylallyl diphosphate (DMAPP). Acts in the terminal step of the DOXP/MEP pathway for isoprenoid precursor biosynthesis. This chain is 4-hydroxy-3-methylbut-2-enyl diphosphate reductase, found in Geobacter sulfurreducens (strain ATCC 51573 / DSM 12127 / PCA).